The following is a 157-amino-acid chain: Endoribonuclease YbeY (157 aa).

3 residues coordinate Zn(2+): histidine 116, histidine 120, and histidine 126.

This sequence belongs to the endoribonuclease YbeY family. Zn(2+) serves as cofactor.

The protein resides in the cytoplasm. Functionally, single strand-specific metallo-endoribonuclease involved in late-stage 70S ribosome quality control and in maturation of the 3' terminus of the 16S rRNA. This chain is Endoribonuclease YbeY, found in Arthrobacter sp. (strain FB24).